Reading from the N-terminus, the 462-residue chain is Cytochrome P450 20A1 (462 aa).

The chain crosses the membrane as a helical span at residues 4–24 (FAIFAVTFLLALVGAVLYLYP). Cys409 contacts heme.

This sequence belongs to the cytochrome P450 family. Requires heme as cofactor.

It is found in the membrane. This chain is Cytochrome P450 20A1 (CYP20A1), found in Homo sapiens (Human).